We begin with the raw amino-acid sequence, 380 residues long: L-lactate dehydrogenase (380 aa).

The FMN hydroxy acid dehydrogenase domain occupies 1–380 (MIISASTDYR…SADSLVQGLR (380 aa)). Residue Tyr24 participates in substrate binding. FMN contacts are provided by Ser106 and Gln127. Tyr129 contacts substrate. Residue Thr155 coordinates FMN. Arg164 is a binding site for substrate. FMN is bound at residue Lys251. His275 functions as the Proton acceptor in the catalytic mechanism. Position 278 (Arg278) interacts with substrate. FMN is bound at residue 306-330 (DSGIRSGLDVVRMIALGADGVLLGR).

The protein belongs to the FMN-dependent alpha-hydroxy acid dehydrogenase family. Requires FMN as cofactor.

The protein localises to the cell inner membrane. It carries out the reaction (S)-lactate + A = pyruvate + AH2. In terms of biological role, catalyzes the conversion of L-lactate to pyruvate. Is coupled to the respiratory chain. The protein is L-lactate dehydrogenase of Serratia proteamaculans (strain 568).